Consider the following 121-residue polypeptide: Small ribosomal subunit protein uS13 (121 aa).

Positions 97-121 (VRGQRTRTNARTRRGARKTVAGKKK) are disordered. A compositionally biased stretch (basic residues) spans 100–121 (QRTRTNARTRRGARKTVAGKKK).

It belongs to the universal ribosomal protein uS13 family. Part of the 30S ribosomal subunit. Forms a loose heterodimer with protein S19. Forms two bridges to the 50S subunit in the 70S ribosome.

In terms of biological role, located at the top of the head of the 30S subunit, it contacts several helices of the 16S rRNA. In the 70S ribosome it contacts the 23S rRNA (bridge B1a) and protein L5 of the 50S subunit (bridge B1b), connecting the 2 subunits; these bridges are implicated in subunit movement. Contacts the tRNAs in the A and P-sites. This is Small ribosomal subunit protein uS13 from Prochlorococcus marinus (strain MIT 9313).